The following is a 350-amino-acid chain: Opsin, longwave 563 nm (350 aa).

Over 1-45 (HRLAGRHPQDNYEDSTQSSIFTYTNSNSTRGPFEGPNYHIAPRWV) the chain is Extracellular. Asn27 carries an N-linked (GlcNAc...) asparagine glycan. Residues 46 to 70 (YHLTSVWMLFVVVASVFTNGLVLAA) traverse the membrane as a helical segment. At 71–82 (TMKFKKLRHPLN) the chain is on the cytoplasmic side. Residues 83 to 108 (WILVNLAIADLAETVIASTISVVNQV) form a helical membrane-spanning segment. The Extracellular portion of the chain corresponds to 109-122 (HGYFVLGHPMCVLE). A disulfide bridge links Cys119 with Cys196. A helical transmembrane segment spans residues 123 to 142 (GYTVSLCGITGLWSLAIISW). Residues 143 to 161 (ERWLVVCKPFGNVRFDAKL) lie on the Cytoplasmic side of the membrane. Residues 162–185 (AIVGVAFSWIWSAVWTAPPIFGWS) traverse the membrane as a helical segment. Residues 186-211 (RYWPHGLKTSCGPDVFSGSSYPGVQS) are Extracellular-facing. The chain crosses the membrane as a helical span at residues 212–239 (YMIVLMITCCFLPLGIIVLCYLQVWLAI). The Cytoplasmic portion of the chain corresponds to 240-261 (RAVAKQQKESESTQKAEKEVTR). The chain crosses the membrane as a helical span at residues 262–285 (MVVVMIVAYCVCWGPYTFFACFAA). Residues 286–293 (ANPGYAFH) lie on the Extracellular side of the membrane. A helical transmembrane segment spans residues 294 to 318 (PLMAALPAYFAKSATIYNPIIYVFM). An N6-(retinylidene)lysine modification is found at Lys305. The Cytoplasmic segment spans residues 319–350 (NRQFRNCILQLFGKKVDDGSELSSASKTEVSS).

The protein belongs to the G-protein coupled receptor 1 family. Opsin subfamily. Post-translationally, phosphorylated on some or all of the serine and threonine residues present in the C-terminal region. The color pigments are found in the cone photoreceptor cells.

The protein resides in the membrane. Its function is as follows. Visual pigments are the light-absorbing molecules that mediate vision. They consist of an apoprotein, opsin, covalently linked to cis-retinal. The sequence is that of Opsin, longwave 563 nm from Callithrix jacchus (White-tufted-ear marmoset).